The primary structure comprises 148 residues: Puroindoline-A (148 aa).

Residues Met-1–Ala-19 form the signal peptide. The propeptide occupies Gln-20–Tyr-28. Positions Tyr-147 to Trp-148 are cleaved as a propeptide — removed in mature form.

In terms of processing, five disulfide bonds are present. As to expression, endosperm and aleurone layer of developing kernels. In the aleurone layer, mainly localized to starch granules and the surface of the plasma membrane, forming a uniform layer, also abundant in the intercellular space. In the endosperm, mainly localized to starch granules and the plasma membrane, but less abundant in the intercellular space. Not found in roots or coleoptiles.

It is found in the membrane. The protein resides in the secreted. Its subcellular location is the extracellular space. Acts as a membranotoxin, probably through its antibacterial and antifungal activities, contributing to the defense mechanism of the plant against predators. Forms monovalent cation-selective ion channels in membranes. Has antibacterial activity against the Gram-positive bacteria S.aureus and C.michiganensis, and the Gram-negative bacteria E.coli, P.syringae pv phaseoli, A.tumefaciens and E.carotovora subsp carotovora. Acts synergistically with PINB against bacteria. Contributes to grain texture and hardness. The polypeptide is Puroindoline-A (PINA) (Triticum aestivum (Wheat)).